The sequence spans 382 residues: Neuropeptide Y receptor type 1 (382 aa).

At methionine 1–histidine 33 the chain is on the extracellular side. N-linked (GlcNAc...) asparagine glycosylation is found at asparagine 2, asparagine 11, and asparagine 17. The helical transmembrane segment at leucine 34–valine 54 threads the bilayer. Residues serine 55–asparagine 75 are Cytoplasmic-facing. Residues isoleucine 76–threonine 96 traverse the membrane as a helical segment. Topologically, residues phenylalanine 97–asparagine 115 are extracellular. Residues cysteine 112 and cysteine 197 are joined by a disulfide bond. The chain crosses the membrane as a helical span at residues proline 116 to glutamate 136. Over arginine 137–histidine 153 the chain is Cytoplasmic. The chain crosses the membrane as a helical span at residues alanine 154–isoleucine 174. The Extracellular portion of the chain corresponds to tyrosine 175–tyrosine 210. The chain crosses the membrane as a helical span at residues threonine 211 to phenylalanine 231. Residues lysine 232 to arginine 259 lie on the Cytoplasmic side of the membrane. A helical membrane pass occupies residues isoleucine 260–isoleucine 280. Topologically, residues phenylalanine 281–asparagine 298 are extracellular. A helical membrane pass occupies residues leucine 299–tyrosine 319. The Cytoplasmic segment spans residues glycine 320–valine 382. The S-palmitoyl cysteine moiety is linked to residue cysteine 337. A phosphoserine mark is found at serine 367 and serine 375.

Belongs to the G-protein coupled receptor 1 family. In terms of tissue distribution, the alpha form is highly expressed in the brain, heart, kidney, spleen, skeletal muscle, and lung, whereas the beta receptor mRNA was not detected in these tissues. However, the beta form is expressed in mouse embryonic developmental stage (7 and 11 days), bone marrow cells and several hematopoietic cell lines.

It is found in the cell membrane. Receptor for neuropeptide Y and peptide YY. This Mus musculus (Mouse) protein is Neuropeptide Y receptor type 1 (Npy1r).